The sequence spans 192 residues: Probable cobalt-precorrin-6B C(15)-methyltransferase (decarboxylating) (192 aa).

Residues threonine 20, glycine 44 to glycine 48, glutamate 68, and alanine 96 each bind S-adenosyl-L-methionine.

Belongs to the methyltransferase superfamily. Archaeal-type CbiT family.

It catalyses the reaction Co-precorrin-6B + S-adenosyl-L-methionine = Co-precorrin-7 + S-adenosyl-L-homocysteine + CO2. The protein operates within cofactor biosynthesis; adenosylcobalamin biosynthesis; cob(II)yrinate a,c-diamide from sirohydrochlorin (anaerobic route): step 8/10. Its function is as follows. Catalyzes the methylation of C-15 in cobalt-precorrin-6B followed by the decarboxylation of C-12 to form cobalt-precorrin-7. In Sulfurisphaera tokodaii (strain DSM 16993 / JCM 10545 / NBRC 100140 / 7) (Sulfolobus tokodaii), this protein is Probable cobalt-precorrin-6B C(15)-methyltransferase (decarboxylating).